The chain runs to 298 residues: GTPase Era (298 aa).

Residues 8 to 176 (RCGRIAVIGR…VSDLLALLPE (169 aa)) form the Era-type G domain. Residues 16–23 (GRPNVGKS) are G1. 16–23 (GRPNVGKS) provides a ligand contact to GTP. The segment at 42–46 (QTTRH) is G2. The segment at 63-66 (DTPG) is G3. GTP-binding positions include 63-67 (DTPGL) and 125-128 (NKID). The tract at residues 125-128 (NKID) is G4. The G5 stretch occupies residues 155–157 (VSA). A KH type-2 domain is found at 199–283 (VREQVMRQLG…FLETWVRVRK (85 aa)).

The protein belongs to the TRAFAC class TrmE-Era-EngA-EngB-Septin-like GTPase superfamily. Era GTPase family. As to quaternary structure, monomer.

It localises to the cytoplasm. It is found in the cell inner membrane. Its function is as follows. An essential GTPase that binds both GDP and GTP, with rapid nucleotide exchange. Plays a role in 16S rRNA processing and 30S ribosomal subunit biogenesis and possibly also in cell cycle regulation and energy metabolism. This Xylella fastidiosa (strain Temecula1 / ATCC 700964) protein is GTPase Era.